The sequence spans 289 residues: Proteasome subunit beta (289 aa).

The propeptide at 1–59 (MEHTPRNAGFALPAAYMSTMTSSFIDFLKAEAPDLLPRARVENMPAVPGGGSAFEPPHG) is removed in mature form; by autocatalysis. Thr60 functions as the Nucleophile in the catalytic mechanism.

Belongs to the peptidase T1B family. In terms of assembly, the 20S proteasome core is composed of 14 alpha and 14 beta subunits that assemble into four stacked heptameric rings, resulting in a barrel-shaped structure. The two inner rings, each composed of seven catalytic beta subunits, are sandwiched by two outer rings, each composed of seven alpha subunits. The catalytic chamber with the active sites is on the inside of the barrel. Has a gated structure, the ends of the cylinder being occluded by the N-termini of the alpha-subunits. Is capped by the proteasome-associated ATPase, ARC.

The protein localises to the cytoplasm. It catalyses the reaction Cleavage of peptide bonds with very broad specificity.. It functions in the pathway protein degradation; proteasomal Pup-dependent pathway. Its activity is regulated as follows. The formation of the proteasomal ATPase ARC-20S proteasome complex, likely via the docking of the C-termini of ARC into the intersubunit pockets in the alpha-rings, may trigger opening of the gate for substrate entry. Interconversion between the open-gate and close-gate conformations leads to a dynamic regulation of the 20S proteasome proteolysis activity. Functionally, component of the proteasome core, a large protease complex with broad specificity involved in protein degradation. The sequence is that of Proteasome subunit beta from Saccharomonospora viridis (strain ATCC 15386 / DSM 43017 / JCM 3036 / CCUG 5913 / NBRC 12207 / NCIMB 9602 / P101) (Thermoactinomyces viridis).